The following is a 25-amino-acid chain: Caerin-1.3 (25 aa).

L25 is subject to Leucine amide.

In terms of tissue distribution, expressed by the skin parotoid and/or rostral glands.

The protein resides in the secreted. In terms of biological role, antibacterial peptide, that adopts an alpha helical conformation which can disrupt bacterial membranes. Each caerin displays a different antimicrobial specificity. The polypeptide is Caerin-1.3 (Ranoidea caerulea (Green tree frog)).